A 218-amino-acid polypeptide reads, in one-letter code: 23 kDa integral membrane protein (218 aa).

The Cytoplasmic portion of the chain corresponds to 1–12 (MATLGTGMRCLK). A helical membrane pass occupies residues 13–36 (SCVFILNIICLLCSLVLIGAGAYV). Over 37–55 (EVKFSQYEANLHKVWQAAP) the chain is Extracellular. A helical transmembrane segment spans residues 56 to 71 (IAIIVVGVVILIVSFL). Over 72-82 (GCCGAIKENVC) the chain is Cytoplasmic. The helical transmembrane segment at 83 to 108 (MLYMYAFFLIVLLIAELVAAIVAVVY) threads the bilayer. The Extracellular segment spans residues 109–183 (KDKIDDEINT…SVFSAFLKRN (75 aa)). Residues 184 to 205 (LIIVACVAFGVCFFQLLSIVIA) form a helical membrane-spanning segment. Residues 206–218 (CCLGQRIHDYQNV) lie on the Cytoplasmic side of the membrane.

Belongs to the tetraspanin (TM4SF) family.

The protein localises to the membrane. This Schistosoma japonicum (Blood fluke) protein is 23 kDa integral membrane protein.